The sequence spans 585 residues: Arginine--tRNA ligase (585 aa).

Positions 126–136 (PNIAKEMHVGH) match the 'HIGH' region motif.

This sequence belongs to the class-I aminoacyl-tRNA synthetase family. In terms of assembly, monomer.

The protein localises to the cytoplasm. The catalysed reaction is tRNA(Arg) + L-arginine + ATP = L-arginyl-tRNA(Arg) + AMP + diphosphate. This is Arginine--tRNA ligase from Crocosphaera subtropica (strain ATCC 51142 / BH68) (Cyanothece sp. (strain ATCC 51142)).